The primary structure comprises 27 residues: Fructokinase (27 aa).

The protein belongs to the ROK (NagC/XylR) family. As to quaternary structure, homodimer. Mg(2+) is required as a cofactor.

The catalysed reaction is D-fructose + ATP = D-fructose 6-phosphate + ADP + H(+). Inhibition by zinc ions. The sequence is that of Fructokinase from Fusobacterium mortiferum.